The primary structure comprises 472 residues: MSSSKNSLANKAQAWSARFTEPVDELVQRYTASIGFDQRFAMVDIAGSLAHAEMLATQKIISAQDLADIQKGMAQIKSEIEAGQFEWQLALEDVHLNIEARLTQLVGDAGKRLHTGRSRNDQVATDLRLWLRASVDDISVTLKSLRIALLDLAEKHASTIMPGHTHLQVAQPITFGHHLMAYYEMFSRDASRLVDLRARFNRLPLGAAALAGTTYPIDREQVARILGFDGICNNSLDAVSDRDFAIEFCAFSSILMMHVSRLSEELVLWLSPRFGFIDLPDRFCTGSSIMPQKKNPDVPELARGKTGRVYGDLISLLTLMKSQPLAYNKDNQEDKEPLFDAVDTVQDTLRIFADMVPHIEVKAEVMKAAAEEGFATATDLADYLVKKGLAFRDAHEAVAHAVKACVGRNCMLTDLSLAELRFACGLDNRPELMSDDVFALLTVDGSVQSRQHAGGTAPAQVLAAIKRARTDL.

Belongs to the lyase 1 family. Argininosuccinate lyase subfamily.

It is found in the cytoplasm. The enzyme catalyses 2-(N(omega)-L-arginino)succinate = fumarate + L-arginine. The protein operates within amino-acid biosynthesis; L-arginine biosynthesis; L-arginine from L-ornithine and carbamoyl phosphate: step 3/3. The polypeptide is Argininosuccinate lyase (Polynucleobacter asymbioticus (strain DSM 18221 / CIP 109841 / QLW-P1DMWA-1) (Polynucleobacter necessarius subsp. asymbioticus)).